The sequence spans 273 residues: Peptidyl-prolyl cis-trans isomerase E (273 aa).

Residues 1–48 form the RRM domain; that stretch reads MPMDYQTEKHRGFAFVEFEEVEDAMSAIDNMNESEIFGRTIRVNVARP. A disordered region spans residues 77-103; the sequence is RKLDEPDIVNPSDTSENVEDLSDEEMR. The region spanning 115-271 is the PPIase cyclophilin-type domain; that stretch reads FFDIRIGNGD…EPVIISRCGE (157 aa).

It belongs to the cyclophilin-type PPIase family. PPIase E subfamily.

It is found in the cytoplasm. It carries out the reaction [protein]-peptidylproline (omega=180) = [protein]-peptidylproline (omega=0). With respect to regulation, binds cyclosporin A (CsA). CsA mediates some of its effects via an inhibitory action on PPIase. Functionally, PPIases accelerate the folding of proteins. It catalyzes the cis-trans isomerization of proline imidic peptide bonds in oligopeptides. In Schistosoma mansoni (Blood fluke), this protein is Peptidyl-prolyl cis-trans isomerase E.